A 361-amino-acid chain; its full sequence is MTFDLKTEEGLLSYLTKHLSLDVAPNGVKRLSGGFVNVTWRVGLNAPYHGHTSIILKHAQPHLSSDIDFKIGVERSAYEYQALKIVSANSSLLGSSDIRVSVPEGLHYDVVNNALIMQDVGTMKTLLDYVTAKPPISAEIASLVGSQIGAFIARLHNLGRENKDKDDFKFFSGNIVGRTTADQLYQTIIPNAAKYGIDDPILPIVVKELVEEVMNSEETLIMADLWSGNILLQFDENSTELTRIWLVDWELCKYGPPSLDMGYFLGDCFLVARFQDQLVGTSMRQAYLKSYARNVKEPINYAKATAGIGAHLVMWTDFMKWGNDEEREEFVKKGVEAFHEANEDNRNGEITSILVKEASRT.

ATP is bound by residues N37, K57, and 118–120 (QDV). D224 is a catalytic residue. Residue 248–250 (DWE) participates in ATP binding.

This sequence belongs to the methylthioribose kinase family. Monomer. Mg(2+) is required as a cofactor.

It carries out the reaction 4-hydroxytryptamine + ATP = norbaeocystin + ADP + H(+). The enzyme catalyses psilocin + ATP = psilocybin + ADP + H(+). It catalyses the reaction 4-hydroxy-N,N,N-trimethyltryptamine + ATP = aeruginascin + ADP + H(+). It functions in the pathway secondary metabolite biosynthesis. Functionally, 4-hydroxytryptamine kinase; part of the gene cluster that mediates the biosynthesis of psilocybin, a psychotropic tryptamine-derived natural product. The first step in the pathway is the decarboxylation of L-tryptophan to tryptamine by the decarboxylase psiD. PsiD does not decarboxylate phenylalanine, tyrosine, or 5-hydroxy- L -tryptophan (5-HTP). 4-hydroxy-L-tryptophan is accepted as substrate by psiD as well. The cytochrome P450 monooxygenase psiH then converts tryptamine to 4-hydroxytryptamine. The kinase psiK catalyzes the 4-O-phosphorylation step by converting 4-hydroxytryptamine into norbaeocystin. The methyltransferase psiM then catalyzes iterative methyl transfer to the amino group of norbaeocystin to yield psilocybin via a monomethylated intermediate, baeocystin. 4-hydroxy-6-methyl-l-tryptophancan also be converted the decarboxylase PsiD, kinase PsiK, and methyltransferase PsiM into respectively 6-methyl-norbaeocystin, 6-methylbaeocystin, and 6-methylpsilocybin. PsiK kinase can also turn psilocin into psilocybin. This activity may represent a protective mechanism to rephosphorylate the unstable psilocin to the stable psilocybin in case of intracellular ester cleavage. Moreover, psiK is able to O-phosphorylate the quaternary amine 4-hydroxy-N,N,N-trimethyltryptamine (4-OH-TMT) to yield aeruginascin, another bioactive compound found in Psilocybe species. The protein is 4-hydroxytryptamine kinase of Psilocybe cyanescens.